Reading from the N-terminus, the 355-residue chain is 3-dehydroquinate synthase (355 aa).

Residues 71–76, 105–109, 129–130, Lys142, Lys151, and 169–172 each bind NAD(+); these read EGEASK, GVVGD, TS, and TLNT. Zn(2+) is bound by residues Glu184, His246, and His263.

The protein belongs to the sugar phosphate cyclases superfamily. Dehydroquinate synthase family. It depends on NAD(+) as a cofactor. Co(2+) is required as a cofactor. Zn(2+) serves as cofactor.

Its subcellular location is the cytoplasm. The enzyme catalyses 7-phospho-2-dehydro-3-deoxy-D-arabino-heptonate = 3-dehydroquinate + phosphate. The protein operates within metabolic intermediate biosynthesis; chorismate biosynthesis; chorismate from D-erythrose 4-phosphate and phosphoenolpyruvate: step 2/7. Functionally, catalyzes the conversion of 3-deoxy-D-arabino-heptulosonate 7-phosphate (DAHP) to dehydroquinate (DHQ). This Streptococcus mutans serotype c (strain ATCC 700610 / UA159) protein is 3-dehydroquinate synthase.